The sequence spans 98 residues: uncharacterized protein (98 aa).

Positions 19 to 31 (RRMSKRSKNKAKK) are enriched in basic residues. The interval 19-47 (RRMSKRSKNKAKKERVPVEDRPPTPMPTS) is disordered.

Belongs to the lymphocryptovirus BNLF2b family.

This is an uncharacterized protein from Homo sapiens (Human).